The following is a 368-amino-acid chain: tRNA-specific 2-thiouridylase MnmA (368 aa).

ATP contacts are provided by residues A14–S21 and L40. C108 (nucleophile) is an active-site residue. A disulfide bond links C108 and C204. Residue G132 participates in ATP binding. The interaction with tRNA stretch occupies residues K154–Q156. The Cysteine persulfide intermediate role is filled by C204.

The protein belongs to the MnmA/TRMU family.

The protein localises to the cytoplasm. It carries out the reaction S-sulfanyl-L-cysteinyl-[protein] + uridine(34) in tRNA + AH2 + ATP = 2-thiouridine(34) in tRNA + L-cysteinyl-[protein] + A + AMP + diphosphate + H(+). Functionally, catalyzes the 2-thiolation of uridine at the wobble position (U34) of tRNA, leading to the formation of s(2)U34. The polypeptide is tRNA-specific 2-thiouridylase MnmA (Rickettsia canadensis (strain McKiel)).